The sequence spans 232 residues: Uracil-DNA glycosylase (232 aa).

Aspartate 64 functions as the Proton acceptor in the catalytic mechanism.

This sequence belongs to the uracil-DNA glycosylase (UDG) superfamily. UNG family.

It localises to the cytoplasm. The catalysed reaction is Hydrolyzes single-stranded DNA or mismatched double-stranded DNA and polynucleotides, releasing free uracil.. In terms of biological role, excises uracil residues from the DNA which can arise as a result of misincorporation of dUMP residues by DNA polymerase or due to deamination of cytosine. This is Uracil-DNA glycosylase from Shouchella clausii (strain KSM-K16) (Alkalihalobacillus clausii).